Here is a 1466-residue protein sequence, read N- to C-terminus: DNA-directed RNA polymerase subunit beta'' (1466 aa).

Positions 220, 296, 303, and 306 each coordinate Zn(2+). Residues 618 to 725 form a disordered region; the sequence is TREEDLEDEY…EDEYDSSEED (108 aa). Acidic residues-rich tracts occupy residues 621-631, 639-651, and 707-725; these read EDLEDEYETLE, DEYE…DEYG, and LEED…SEED.

It belongs to the RNA polymerase beta' chain family. RpoC2 subfamily. In plastids the minimal PEP RNA polymerase catalytic core is composed of four subunits: alpha, beta, beta', and beta''. When a (nuclear-encoded) sigma factor is associated with the core the holoenzyme is formed, which can initiate transcription. Requires Zn(2+) as cofactor.

Its subcellular location is the plastid. It localises to the chloroplast. The enzyme catalyses RNA(n) + a ribonucleoside 5'-triphosphate = RNA(n+1) + diphosphate. In terms of biological role, DNA-dependent RNA polymerase catalyzes the transcription of DNA into RNA using the four ribonucleoside triphosphates as substrates. The polypeptide is DNA-directed RNA polymerase subunit beta'' (Agrostis stolonifera (Creeping bentgrass)).